We begin with the raw amino-acid sequence, 855 residues long: Valine--tRNA ligase (855 aa).

Residues 42-52 (PTISGKLHIGH) carry the 'HIGH' region motif. The 'KMSKS' region signature appears at 574-578 (KMSKS). An ATP-binding site is contributed by lysine 577.

The protein belongs to the class-I aminoacyl-tRNA synthetase family. ValS type 2 subfamily. In terms of assembly, monomer.

It localises to the cytoplasm. It carries out the reaction tRNA(Val) + L-valine + ATP = L-valyl-tRNA(Val) + AMP + diphosphate. Its function is as follows. Catalyzes the attachment of valine to tRNA(Val). As ValRS can inadvertently accommodate and process structurally similar amino acids such as threonine, to avoid such errors, it has a 'posttransfer' editing activity that hydrolyzes mischarged Thr-tRNA(Val) in a tRNA-dependent manner. The polypeptide is Valine--tRNA ligase (Wolbachia sp. subsp. Brugia malayi (strain TRS)).